Reading from the N-terminus, the 78-residue chain is Large ribosomal subunit protein eL20 (78 aa).

It belongs to the eukaryotic ribosomal protein eL20 family. Part of the 50S ribosomal subunit. Binds 23S rRNA.

This is Large ribosomal subunit protein eL20 from Nanoarchaeum equitans (strain Kin4-M).